Here is a 347-residue protein sequence, read N- to C-terminus: Fructose-1,6-bisphosphatase (347 aa).

AMP is bound by residues 19 to 23 (ILQEQ) and 44 to 48 (SGELS). Mg(2+)-binding residues include aspartate 85 and glutamate 114. Residue 127–128 (SY) participates in AMP binding. Positions 133, 135, and 136 each coordinate Mg(2+). 136–139 (DGSS) contacts substrate. Residue lysine 155 coordinates AMP. Substrate-binding positions include 227–230 (NEGY), 258–263 (RYIGSM), tyrosine 279, and 288–290 (KLR). Residue glutamate 294 coordinates Mg(2+).

Belongs to the FBPase class 1 family. As to quaternary structure, homotetramer. The cofactor is Mg(2+).

The enzyme catalyses beta-D-fructose 1,6-bisphosphate + H2O = beta-D-fructose 6-phosphate + phosphate. It functions in the pathway carbohydrate biosynthesis; gluconeogenesis. With respect to regulation, subject to complex allosteric regulation. The enzyme can assume an active R-state, or an inactive T-state. Intermediate conformations may exist. AMP acts as allosteric inhibitor. AMP binding affects the turnover of bound substrate and not the affinity for substrate. This is Fructose-1,6-bisphosphatase (fbp1) from Schizosaccharomyces pombe (strain 972 / ATCC 24843) (Fission yeast).